Here is a 432-residue protein sequence, read N- to C-terminus: Sphingosine N-acyltransferase-like protein ALT7 (432 aa).

Residues 55 to 75 (IGLSLGSLLLLILMFTCLPYY) form a helical membrane-spanning segment. An N-linked (GlcNAc...) asparagine glycan is attached at Asn77. 7 consecutive transmembrane segments (helical) span residues 91 to 111 (FIFS…IYLL), 128 to 148 (FTEQ…GMYI), 172 to 192 (GLTK…IVVV), 226 to 246 (VGNV…FAKL), 250 to 270 (LGFQ…WLVA), 273 to 293 (GLYL…MPYG), and 338 to 358 (AFLG…GMIL). In terms of domain architecture, TLC spans 123–366 (KLMVRFTEQG…ILKVAYKVFQ (244 aa)). A disordered region spans residues 370-395 (ADDTRSDSEESGYGTSDHEGDCYGAQ).

This sequence belongs to the sphingosine N-acyltransferase family.

Its subcellular location is the membrane. It participates in mycotoxin biosynthesis. Sphingosine N-acyltransferase-like protein; part of the gene cluster that mediates the biosynthesis of the host-selective toxins (HSTs) AAL-toxins, sphinganine-analog mycotoxins responsible for Alternaria stem canker on tomato by the tomato pathotype. The biosynthesis starts with the polyketide synthase ALT1-catalyzed C-16 carbon chain assembly from one starter acetyl-CoA unit with malonyl-CoA extender units. ALT1 also selectively transfers methyl groups at the first and the third cycle of chain elongation for AAL toxin. The C-16 polyketide chain is released from the enzyme by a nucleophilic attack of a carbanion, which is derived from R-carbon of glycin by decarboxylation, on the carbonyl carbon of polyketide acyl chain. This step is probably catalyzed by a pyridoxal 5'-phosphate-dependent aminoacyl transferase ALT4. The respective functions of the other enzymes encoded by the cluster have still to be elucidated. The sphingosine N-acyltransferase-like protein ALT7 seems not to act as a resistance/self-tolerance factor against the toxin in the toxin biosynthetic gene cluster, contrary to what is expected. The polypeptide is Sphingosine N-acyltransferase-like protein ALT7 (Alternaria alternata (Alternaria rot fungus)).